The chain runs to 233 residues: Large ribosomal subunit protein uL1 (233 aa).

It belongs to the universal ribosomal protein uL1 family. In terms of assembly, part of the 50S ribosomal subunit.

Functionally, binds directly to 23S rRNA. The L1 stalk is quite mobile in the ribosome, and is involved in E site tRNA release. Its function is as follows. Protein L1 is also a translational repressor protein, it controls the translation of the L11 operon by binding to its mRNA. The chain is Large ribosomal subunit protein uL1 from Deinococcus deserti (strain DSM 17065 / CIP 109153 / LMG 22923 / VCD115).